We begin with the raw amino-acid sequence, 177 residues long: R-phycoerythrin beta chain (177 aa).

The phycourobilin site is built by C50 and C61. N72 is subject to N4-methylasparagine. Positions 82 and 158 each coordinate (2R,3E)-phycoerythrobilin.

It belongs to the phycobiliprotein family. As to quaternary structure, heterodimer of an alpha and a beta chain. In terms of processing, contains two covalently linked phycoerythrobilin chromophores and one covalently linked phycourobilin chromophore.

It is found in the plastid. The protein localises to the chloroplast thylakoid membrane. Functionally, light-harvesting photosynthetic bile pigment-protein from the phycobiliprotein complex. The polypeptide is R-phycoerythrin beta chain (cpeB) (Pyropia yezoensis (Susabi-nori)).